We begin with the raw amino-acid sequence, 393 residues long: Dual specificity mitogen-activated protein kinase kinase 1 (393 aa).

Residues 1–27 form a disordered region; it reads MPKKKPTPIQLNPAPDGSAVNGTSSAE. In terms of domain architecture, Protein kinase spans 68–361; sequence FEKISELGAG…LKQLMVHAFI (294 aa). Residues 74 to 82, lysine 97, 143 to 146, and 150 to 153 each bind ATP; these read LGAGNGGVV, MEHM, and SLDQ. Lysine 97 is a binding site for U0126. Residue 144 to 146 coordinates K-252a; the sequence is EHM. Catalysis depends on aspartate 190, which acts as the Proton acceptor. ATP is bound by residues 192–195 and aspartate 208; that span reads KPSN. Serine 194 provides a ligand contact to K-252a. 208–211 provides a ligand contact to U0126; the sequence is DFGV. 2 positions are modified to phosphoserine; by BRAF and RAF1: serine 218 and serine 222. An RAF1-binding region spans residues 270–307; it reads ELELMFGCQVEGDAAETPPRPRTPGRPLSSYGMDSRPP. Position 286 is a phosphothreonine (threonine 286). Residue threonine 292 is modified to Phosphothreonine; by MAPK1. Serine 298 bears the Phosphoserine; by PAK mark.

Belongs to the protein kinase superfamily. STE Ser/Thr protein kinase family. MAP kinase kinase subfamily. As to quaternary structure, found in a complex with at least BRAF, HRAS, MAP2K1, MAPK3/ERK1 and RGS14. Forms a heterodimer with MAP2K2/MEK2. Forms heterodimers with KSR2 which further dimerize to form tetramers. Interacts with KSR1 or KSR2 and BRAF; the interaction with KSR1 or KSR2 mediates KSR1-BRAF or KSR2-BRAF dimerization. Interacts with ARBB2, LAMTOR3 and RAF1. Interacts with MAPK1/ERK2. Interacts with MORG1. Interacts with PPARG. Interacts with isoform 1 of VRK2. Interacts with SGK1. Interacts with BIRC6/bruce. Interacts with KAT7; the interaction promotes KAT7 phosphorylation. Interacts with RAF1 and NEK10; the interaction is required for ERK1/2-signaling pathway activation in response to UV irradiation. Interacts with TRAF3IP3. Interacts with MOS. (Microbial infection) Interacts with Yersinia YopJ. Post-translationally, phosphorylation at Ser-218 and Ser-222 by MAP kinase kinase kinases (BRAF or MEKK1) positively regulates kinase activity. Also phosphorylated at Thr-292 by MAPK1/ERK2 and at Ser-298 by PAK. MAPK1/ERK2 phosphorylation of Thr-292 occurs in response to cellular adhesion and leads to inhibition of Ser-298 phosphorylation by PAK. Autophosphorylated at Ser-218 and Ser-222, autophosphosphorylation is promoted by NEK10 following UV irradiation. (Microbial infection) Acetylation by Yersinia YopJ prevents phosphorylation and activation, thus blocking the MAPK signaling pathway. Widely expressed, with extremely low levels in brain.

It localises to the cytoplasm. The protein resides in the cytoskeleton. It is found in the microtubule organizing center. The protein localises to the centrosome. Its subcellular location is the spindle pole body. It localises to the nucleus. The protein resides in the membrane. It carries out the reaction L-seryl-[protein] + ATP = O-phospho-L-seryl-[protein] + ADP + H(+). It catalyses the reaction L-threonyl-[protein] + ATP = O-phospho-L-threonyl-[protein] + ADP + H(+). The catalysed reaction is L-tyrosyl-[protein] + ATP = O-phospho-L-tyrosyl-[protein] + ADP + H(+). Its activity is regulated as follows. Ras proteins such as HRAS mediate the activation of RAF proteins such as RAF1 or BRAF which in turn activate extracellular signal-regulated kinases (ERK) through MAPK (mitogen-activated protein kinases) and ERK kinases MAP2K1/MEK1 and MAP2K2/MEK2. Activation occurs through phosphorylation of Ser-218 and Ser-222. MAP2K1/MEK1 binds KSR1 or KSR2 releasing the inhibitory intramolecular interaction between KSR1 or KSR2 protein kinase and N-terminal domains. This allows KSR1 or KSR2 dimerization with BRAF leading to BRAF activation and phosphorylation of MAP2K1. MAP2K1/MEK1 is also the target of negative feed-back regulation by its substrate kinases, such as MAPK1/ERK2. These phosphorylate MAP2K1/MEK1 on Thr-292, thereby facilitating dephosphorylation of the activating residues Ser-218 and Ser-222. Inhibited by serine/threonine phosphatase 2A. Many inhibitors have been identified including pyrrole derivatives, TAK-733 (one of a series of 8-methylpyrido[2,3-d]pyrimidine-4,7(3H,8H)-dione derivatives), CH4987655 and RDEA119/BAY 869766. Its function is as follows. Dual specificity protein kinase which acts as an essential component of the MAP kinase signal transduction pathway. Binding of extracellular ligands such as growth factors, cytokines and hormones to their cell-surface receptors activates RAS and this initiates RAF1 activation. RAF1 then further activates the dual-specificity protein kinases MAP2K1/MEK1 and MAP2K2/MEK2. Both MAP2K1/MEK1 and MAP2K2/MEK2 function specifically in the MAPK/ERK cascade, and catalyze the concomitant phosphorylation of a threonine and a tyrosine residue in a Thr-Glu-Tyr sequence located in the extracellular signal-regulated kinases MAPK3/ERK1 and MAPK1/ERK2, leading to their activation and further transduction of the signal within the MAPK/ERK cascade. Activates BRAF in a KSR1 or KSR2-dependent manner; by binding to KSR1 or KSR2 releases the inhibitory intramolecular interaction between KSR1 or KSR2 protein kinase and N-terminal domains which promotes KSR1 or KSR2-BRAF dimerization and BRAF activation. Depending on the cellular context, this pathway mediates diverse biological functions such as cell growth, adhesion, survival and differentiation, predominantly through the regulation of transcription, metabolism and cytoskeletal rearrangements. One target of the MAPK/ERK cascade is peroxisome proliferator-activated receptor gamma (PPARG), a nuclear receptor that promotes differentiation and apoptosis. MAP2K1/MEK1 has been shown to export PPARG from the nucleus. The MAPK/ERK cascade is also involved in the regulation of endosomal dynamics, including lysosome processing and endosome cycling through the perinuclear recycling compartment (PNRC), as well as in the fragmentation of the Golgi apparatus during mitosis. This Homo sapiens (Human) protein is Dual specificity mitogen-activated protein kinase kinase 1.